Here is a 271-residue protein sequence, read N- to C-terminus: L-aspartate dehydrogenase (271 aa).

Residues Ala-124 and Asn-192 each contribute to the NAD(+) site. His-222 is an active-site residue.

It belongs to the L-aspartate dehydrogenase family.

It carries out the reaction L-aspartate + NADP(+) + H2O = oxaloacetate + NH4(+) + NADPH + H(+). The catalysed reaction is L-aspartate + NAD(+) + H2O = oxaloacetate + NH4(+) + NADH + H(+). Its pathway is cofactor biosynthesis; NAD(+) biosynthesis; iminoaspartate from L-aspartate (dehydrogenase route): step 1/1. Specifically catalyzes the NAD or NADP-dependent dehydrogenation of L-aspartate to iminoaspartate. This is L-aspartate dehydrogenase from Methanosarcina mazei (strain ATCC BAA-159 / DSM 3647 / Goe1 / Go1 / JCM 11833 / OCM 88) (Methanosarcina frisia).